The sequence spans 141 residues: Nucleoside diphosphate kinase (141 aa).

ATP is bound by residues Lys11, Phe59, Arg87, Thr93, Arg104, and Asn114. The Pros-phosphohistidine intermediate role is filled by His117.

The protein belongs to the NDK family. As to quaternary structure, homotetramer. It depends on Mg(2+) as a cofactor.

The protein localises to the cytoplasm. It carries out the reaction a 2'-deoxyribonucleoside 5'-diphosphate + ATP = a 2'-deoxyribonucleoside 5'-triphosphate + ADP. The catalysed reaction is a ribonucleoside 5'-diphosphate + ATP = a ribonucleoside 5'-triphosphate + ADP. In terms of biological role, major role in the synthesis of nucleoside triphosphates other than ATP. The ATP gamma phosphate is transferred to the NDP beta phosphate via a ping-pong mechanism, using a phosphorylated active-site intermediate. This Variovorax paradoxus (strain S110) protein is Nucleoside diphosphate kinase.